The following is a 260-amino-acid chain: tRNA pseudouridine synthase A (260 aa).

Aspartate 52 serves as the catalytic Nucleophile. Tyrosine 110 is a binding site for substrate.

It belongs to the tRNA pseudouridine synthase TruA family. Homodimer.

The enzyme catalyses uridine(38/39/40) in tRNA = pseudouridine(38/39/40) in tRNA. Its function is as follows. Formation of pseudouridine at positions 38, 39 and 40 in the anticodon stem and loop of transfer RNAs. This Thiobacillus denitrificans (strain ATCC 25259 / T1) protein is tRNA pseudouridine synthase A.